The primary structure comprises 497 residues: Cytochrome P450 2D6 (497 aa).

Asp-301 provides a ligand contact to substrate. A heme-binding site is contributed by Cys-443.

It belongs to the cytochrome P450 family. It depends on heme as a cofactor.

Its subcellular location is the endoplasmic reticulum membrane. It localises to the microsome membrane. The enzyme catalyses (5Z,8Z,11Z,14Z)-eicosatetraenoate + reduced [NADPH--hemoprotein reductase] + O2 = (8R,9S)-epoxy-(5Z,11Z,14Z)-eicosatrienoate + oxidized [NADPH--hemoprotein reductase] + H2O + H(+). The catalysed reaction is (5Z,8Z,11Z,14Z)-eicosatetraenoate + reduced [NADPH--hemoprotein reductase] + O2 = (11R,12S)-epoxy-(5Z,8Z,14Z)-eicosatrienoate + oxidized [NADPH--hemoprotein reductase] + H2O + H(+). It carries out the reaction (5Z,8Z,11Z,14Z)-eicosatetraenoate + reduced [NADPH--hemoprotein reductase] + O2 = (14S,15R)-epoxy-(5Z,8Z,11Z)-eicosatrienoate + oxidized [NADPH--hemoprotein reductase] + H2O + H(+). It catalyses the reaction N-(5Z,8Z,11Z,14Z-eicosatetraenoyl)-ethanolamine + reduced [NADPH--hemoprotein reductase] + O2 = N-(8,9-epoxy-5Z,11Z,14Z-eicosatrienoyl)-ethanolamine + oxidized [NADPH--hemoprotein reductase] + H2O + H(+). The enzyme catalyses N-(5Z,8Z,11Z,14Z-eicosatetraenoyl)-ethanolamine + reduced [NADPH--hemoprotein reductase] + O2 = N-(11,12-epoxy-5Z,8Z,14Z-eicosatrienoyl)-ethanolamine + oxidized [NADPH--hemoprotein reductase] + H2O + H(+). The catalysed reaction is N-(5Z,8Z,11Z,14Z-eicosatetraenoyl)-ethanolamine + reduced [NADPH--hemoprotein reductase] + O2 = N-(14,15-epoxy-5Z,8Z,11Z-eicosatrienoyl)-ethanolamine + oxidized [NADPH--hemoprotein reductase] + H2O + H(+). It carries out the reaction N-(5Z,8Z,11Z,14Z-eicosatetraenoyl)-ethanolamine + reduced [NADPH--hemoprotein reductase] + O2 = N-(20-hydroxy-5Z,8Z,11Z,14Z-eicosatetraenoyl)-ethanolamine + oxidized [NADPH--hemoprotein reductase] + H2O + H(+). It catalyses the reaction (5Z,8Z,11Z,14Z,17Z)-eicosapentaenoate + reduced [NADPH--hemoprotein reductase] + O2 = (17S,18R)-epoxy-(5Z,8Z,11Z,14Z)-eicosatetraenoate + oxidized [NADPH--hemoprotein reductase] + H2O + H(+). The enzyme catalyses (4Z,7Z,10Z,13Z,16Z,19Z)-docosahexaenoate + reduced [NADPH--hemoprotein reductase] + O2 = (19R,20S)-epoxy-(4Z,7Z,10Z,13Z,16Z)-docosapentaenoate + oxidized [NADPH--hemoprotein reductase] + H2O + H(+). The catalysed reaction is (4Z,7Z,10Z,13Z,16Z,19Z)-docosahexaenoate + reduced [NADPH--hemoprotein reductase] + O2 = (19S,20R)-epoxy-(4Z,7Z,10Z,13Z,16Z)-docosapentaenoate + oxidized [NADPH--hemoprotein reductase] + H2O + H(+). It carries out the reaction cholesterol + reduced [NADPH--hemoprotein reductase] + O2 = 25-hydroxycholesterol + oxidized [NADPH--hemoprotein reductase] + H2O + H(+). It catalyses the reaction all-trans-retinol + reduced [NADPH--hemoprotein reductase] + O2 = all-trans-retinal + oxidized [NADPH--hemoprotein reductase] + 2 H2O + H(+). It functions in the pathway cofactor metabolism; retinol metabolism. It participates in lipid metabolism; fatty acid metabolism. The protein operates within steroid metabolism; cholesterol metabolism. Functionally, a cytochrome P450 monooxygenase involved in the metabolism of fatty acids, steroids and retinoids. Mechanistically, uses molecular oxygen inserting one oxygen atom into a substrate, and reducing the second into a water molecule, with two electrons provided by NADPH via cytochrome P450 reductase (NADPH--hemoprotein reductase). Catalyzes the epoxidation of double bonds of polyunsaturated fatty acids (PUFA). Metabolizes endocannabinoid arachidonoylethanolamide (anandamide) to 20-hydroxyeicosatetraenoic acid ethanolamide (20-HETE-EA) and 8,9-, 11,12-, and 14,15-epoxyeicosatrienoic acid ethanolamides (EpETrE-EAs), potentially modulating endocannabinoid system signaling. Catalyzes the hydroxylation of carbon-hydrogen bonds. Metabolizes cholesterol toward 25-hydroxycholesterol, a physiological regulator of cellular cholesterol homeostasis. Catalyzes the oxidative transformations of all-trans retinol to all-trans retinal, a precursor for the active form all-trans-retinoic acid. Also involved in the oxidative metabolism of drugs such as antiarrhythmics, adrenoceptor antagonists, and tricyclic antidepressants. The polypeptide is Cytochrome P450 2D6 (CYP2D6) (Pan paniscus (Pygmy chimpanzee)).